Consider the following 153-residue polypeptide: Cytochrome c-type biogenesis protein CcmE (153 aa).

At 1–8 (MTTRRGRR) the chain is on the cytoplasmic side. A helical; Signal-anchor for type II membrane protein membrane pass occupies residues 9-29 (ALLIAGGVGLLALAAALVLNA). Over 30–153 (LRSNLVFFFS…PSATLQTEAR (124 aa)) the chain is Periplasmic. Heme contacts are provided by H124 and Y128.

It belongs to the CcmE/CycJ family.

Its subcellular location is the cell inner membrane. Heme chaperone required for the biogenesis of c-type cytochromes. Transiently binds heme delivered by CcmC and transfers the heme to apo-cytochromes in a process facilitated by CcmF and CcmH. This Bordetella parapertussis (strain 12822 / ATCC BAA-587 / NCTC 13253) protein is Cytochrome c-type biogenesis protein CcmE.